The sequence spans 406 residues: Serine/threonine transporter SstT (406 aa).

The next 9 helical transmembrane spans lie at 15 to 35, 47 to 67, 81 to 101, 140 to 160, 191 to 211, 215 to 235, 289 to 309, 315 to 335, and 362 to 382; these read LVIQ…VSPS, FVGA…AASI, IIVM…VLSF, ALMS…GLAL, FGIF…ALAG, LLVV…PAMV, IPLG…TLTL, MGIE…AVSA, and IAMQ…SAET.

The protein belongs to the dicarboxylate/amino acid:cation symporter (DAACS) (TC 2.A.23) family.

The protein localises to the cell inner membrane. The enzyme catalyses L-serine(in) + Na(+)(in) = L-serine(out) + Na(+)(out). The catalysed reaction is L-threonine(in) + Na(+)(in) = L-threonine(out) + Na(+)(out). Its function is as follows. Involved in the import of serine and threonine into the cell, with the concomitant import of sodium (symport system). In Vibrio vulnificus (strain YJ016), this protein is Serine/threonine transporter SstT.